The chain runs to 122 residues: MPRIIGIDIPAKKKLKISLTYIYGIGPALSEEIIAKLQLNPEARAAELTEEEIGRLNSLLQSDYVVEGDLRRRVQSDIKRLISIHAYRGQRHRLSLPVRGQRTKTNSRTRKGKRKTVAGKKK.

The disordered stretch occupies residues R93–K122. The span at Q101–K122 shows a compositional bias: basic residues.

Belongs to the universal ribosomal protein uS13 family. In terms of assembly, part of the 30S ribosomal subunit. Forms a loose heterodimer with protein S19. Forms two bridges to the 50S subunit in the 70S ribosome.

Located at the top of the head of the 30S subunit, it contacts several helices of the 16S rRNA. In the 70S ribosome it contacts the 23S rRNA (bridge B1a) and protein L5 of the 50S subunit (bridge B1b), connecting the 2 subunits; these bridges are implicated in subunit movement. Contacts the tRNAs in the A and P-sites. In Chlamydia abortus (strain DSM 27085 / S26/3) (Chlamydophila abortus), this protein is Small ribosomal subunit protein uS13.